The primary structure comprises 155 residues: Large ribosomal subunit protein eL24A (155 aa).

Serine 7 carries the post-translational modification Phosphoserine. The disordered stretch occupies residues 66–155; it reads EVAKKRSRKT…AFQKVAATSR (90 aa). Positions 89–129 are enriched in basic and acidic residues; that stretch reads LIKERRSLKPEVRKANREEKLKANKEKKKAEKAARKAEKAK. Residues 131–142 show a composition bias toward polar residues; it reads AGTQSSKFSKQQ.

The protein belongs to the eukaryotic ribosomal protein eL24 family. In terms of assembly, component of the large ribosomal subunit (LSU). Mature yeast ribosomes consist of a small (40S) and a large (60S) subunit. The 40S small subunit contains 1 molecule of ribosomal RNA (18S rRNA) and 33 different proteins (encoded by 57 genes). The large 60S subunit contains 3 rRNA molecules (25S, 5.8S and 5S rRNA) and 46 different proteins (encoded by 81 genes).

It localises to the cytoplasm. In terms of biological role, component of the ribosome, a large ribonucleoprotein complex responsible for the synthesis of proteins in the cell. The small ribosomal subunit (SSU) binds messenger RNAs (mRNAs) and translates the encoded message by selecting cognate aminoacyl-transfer RNA (tRNA) molecules. The large subunit (LSU) contains the ribosomal catalytic site termed the peptidyl transferase center (PTC), which catalyzes the formation of peptide bonds, thereby polymerizing the amino acids delivered by tRNAs into a polypeptide chain. The nascent polypeptides leave the ribosome through a tunnel in the LSU and interact with protein factors that function in enzymatic processing, targeting, and the membrane insertion of nascent chains at the exit of the ribosomal tunnel. This chain is Large ribosomal subunit protein eL24A, found in Saccharomyces cerevisiae (strain ATCC 204508 / S288c) (Baker's yeast).